The sequence spans 329 residues: Succinylglutamate desuccinylase (329 aa).

Positions 53, 56, and 148 each coordinate Zn(2+). The active site involves glutamate 211.

This sequence belongs to the AspA/AstE family. Succinylglutamate desuccinylase subfamily. Zn(2+) serves as cofactor.

It catalyses the reaction N-succinyl-L-glutamate + H2O = L-glutamate + succinate. It functions in the pathway amino-acid degradation; L-arginine degradation via AST pathway; L-glutamate and succinate from L-arginine: step 5/5. Functionally, transforms N(2)-succinylglutamate into succinate and glutamate. This chain is Succinylglutamate desuccinylase, found in Erwinia tasmaniensis (strain DSM 17950 / CFBP 7177 / CIP 109463 / NCPPB 4357 / Et1/99).